The chain runs to 425 residues: Serine--tRNA ligase (425 aa).

Thr-233 to Glu-235 serves as a coordination point for L-serine. ATP is bound at residue Arg-264–Glu-266. Residue Glu-287 coordinates L-serine. Residue Glu-351–Ser-354 participates in ATP binding. Residue Ser-386 coordinates L-serine.

It belongs to the class-II aminoacyl-tRNA synthetase family. Type-1 seryl-tRNA synthetase subfamily. Homodimer. The tRNA molecule binds across the dimer.

The protein localises to the cytoplasm. The catalysed reaction is tRNA(Ser) + L-serine + ATP = L-seryl-tRNA(Ser) + AMP + diphosphate + H(+). The enzyme catalyses tRNA(Sec) + L-serine + ATP = L-seryl-tRNA(Sec) + AMP + diphosphate + H(+). The protein operates within aminoacyl-tRNA biosynthesis; selenocysteinyl-tRNA(Sec) biosynthesis; L-seryl-tRNA(Sec) from L-serine and tRNA(Sec): step 1/1. Catalyzes the attachment of serine to tRNA(Ser). Is also able to aminoacylate tRNA(Sec) with serine, to form the misacylated tRNA L-seryl-tRNA(Sec), which will be further converted into selenocysteinyl-tRNA(Sec). In Thermosipho melanesiensis (strain DSM 12029 / CIP 104789 / BI429), this protein is Serine--tRNA ligase.